The primary structure comprises 177 residues: KxDL motif-containing protein 1 (177 aa).

Methionine 1 is subject to N-acetylmethionine. Residues 100-177 (SHIPEGSFLE…TDDEEETHEE (78 aa)) are disordered. Residues 125–145 (ATSEQSTGSCDTSPDTVSPSL) show a composition bias toward polar residues.

This sequence belongs to the KXD1 family. In terms of assembly, component of the BLOC-one-related complex (BORC) which is composed of BLOC1S1, BLOC1S2, BORCS5, BORCS6, BORCS7, BORCS8, KXD1 and SNAPIN. Associates with the BLOC-1 complex. Interacts with BLOC1S1. Interacts with DTNBP1/BLOC1S7 (via coiled-coil domain). Widely expressed.

It is found in the lysosome membrane. In terms of biological role, as part of the BORC complex may play a role in lysosomes movement and localization at the cell periphery. Associated with the cytosolic face of lysosomes, the BORC complex may recruit ARL8B and couple lysosomes to microtubule plus-end-directed kinesin motor. May also be involved in the biogenesis of lysosome-related organelles such as melanosomes. This Mus musculus (Mouse) protein is KxDL motif-containing protein 1 (Kxd1).